A 481-amino-acid polypeptide reads, in one-letter code: Palmitoyltransferase PFA4 (481 aa).

The disordered stretch occupies residues 1 to 22 (MTNQDPDDGAYPSSQSDDDGIE). Over 1–66 (MTNQDPDDGA…APLTGRRRTP (66 aa)) the chain is Cytoplasmic. Residues 67-87 (LSWTEVIWVSLTLLLIAVLGY) traverse the membrane as a helical segment. The Lumenal segment spans residues 88–108 (SSQLYVMLPYYEKTPSFSPQA). Residues 109 to 129 (LAAVLVPFNLGLLAIYYNYWL) traverse the membrane as a helical segment. The Cytoplasmic portion of the chain corresponds to 130 to 223 (CVTTDAGSVP…LANCVGHFNH (94 aa)). Residues 181–231 (RYCKTCSAFKPPRSHHCKTCQRCVLRMDHHCPWLANCVGHFNHAHFIRFLF) form the DHHC domain. Cys-211 serves as the catalytic S-palmitoyl cysteine intermediate. Residues 224 to 244 (AHFIRFLFYVDVTCLYHLIMI) traverse the membrane as a helical segment. The Lumenal segment spans residues 245 to 265 (SCRVLDSFNSYTYWREPCARE). Residues 266-286 (LVWLVVNYALCIPVILLVGIF) traverse the membrane as a helical segment. Residues 287–481 (SLYHFYCLAV…EVRPHTPWSV (195 aa)) lie on the Cytoplasmic side of the membrane. A disordered region spans residues 370–481 (SQYRWPPKDP…EVRPHTPWSV (112 aa)). Positions 418 to 431 (SSPSSSDSHSSLHL) are enriched in low complexity. 2 stretches are compositionally biased toward basic and acidic residues: residues 441–452 (LPHHFDPPHDPD) and 466–475 (RGSEGYEVRP).

This sequence belongs to the DHHC palmitoyltransferase family. PFA4 subfamily.

The protein localises to the endoplasmic reticulum membrane. The catalysed reaction is L-cysteinyl-[protein] + hexadecanoyl-CoA = S-hexadecanoyl-L-cysteinyl-[protein] + CoA. In terms of biological role, mediates the reversible addition of palmitate to target proteins, thereby regulating their membrane association and biological function. The chain is Palmitoyltransferase PFA4 from Mycosarcoma maydis (Corn smut fungus).